The primary structure comprises 181 residues: NAD(P)H-quinone oxidoreductase subunit 6, chloroplastic (181 aa).

The next 5 helical transmembrane spans lie at 13 to 33 (PILY…VFFG), 35 to 55 (IIYS…LYLL), 64 to 84 (AQIL…IMLI), 98 to 118 (FGDI…IIMI), and 152 to 172 (LLPF…AITI).

It belongs to the complex I subunit 6 family. As to quaternary structure, NDH is composed of at least 16 different subunits, 5 of which are encoded in the nucleus.

It is found in the plastid. The protein resides in the chloroplast thylakoid membrane. It carries out the reaction a plastoquinone + NADH + (n+1) H(+)(in) = a plastoquinol + NAD(+) + n H(+)(out). It catalyses the reaction a plastoquinone + NADPH + (n+1) H(+)(in) = a plastoquinol + NADP(+) + n H(+)(out). In terms of biological role, NDH shuttles electrons from NAD(P)H:plastoquinone, via FMN and iron-sulfur (Fe-S) centers, to quinones in the photosynthetic chain and possibly in a chloroplast respiratory chain. The immediate electron acceptor for the enzyme in this species is believed to be plastoquinone. Couples the redox reaction to proton translocation, and thus conserves the redox energy in a proton gradient. In Staurastrum punctulatum (Green alga), this protein is NAD(P)H-quinone oxidoreductase subunit 6, chloroplastic (ndhG).